The following is a 354-amino-acid chain: Holliday junction branch migration complex subunit RuvB (354 aa).

A compositionally biased stretch (polar residues) spans 1–10 (MAIKRNQGSN). The interval 1-36 (MAIKRNQGSNPKPEKKERLTKAETHQEQDNLEESIR) is disordered. Basic and acidic residues predominate over residues 12–36 (KPEKKERLTKAETHQEQDNLEESIR). A large ATPase domain (RuvB-L) region spans residues 13–196 (PEKKERLTKA…FGLIQRLKFY (184 aa)). Residues Ile-35, Arg-36, Gly-77, Lys-80, Thr-81, Thr-82, 143-145 (EDY), Arg-186, Tyr-196, and Arg-233 contribute to the ATP site. Residue Thr-81 coordinates Mg(2+). The tract at residues 197–267 (EPEELALIIK…LAAEALDIYQ (71 aa)) is small ATPAse domain (RuvB-S). A head domain (RuvB-H) region spans residues 270-354 (PQGLDWTDRL…EEQLSIFSEQ (85 aa)). Positions 325 and 330 each coordinate DNA.

Belongs to the RuvB family. In terms of assembly, homohexamer. Forms an RuvA(8)-RuvB(12)-Holliday junction (HJ) complex. HJ DNA is sandwiched between 2 RuvA tetramers; dsDNA enters through RuvA and exits via RuvB. An RuvB hexamer assembles on each DNA strand where it exits the tetramer. Each RuvB hexamer is contacted by two RuvA subunits (via domain III) on 2 adjacent RuvB subunits; this complex drives branch migration. In the full resolvosome a probable DNA-RuvA(4)-RuvB(12)-RuvC(2) complex forms which resolves the HJ.

Its subcellular location is the cytoplasm. It carries out the reaction ATP + H2O = ADP + phosphate + H(+). Functionally, the RuvA-RuvB-RuvC complex processes Holliday junction (HJ) DNA during genetic recombination and DNA repair, while the RuvA-RuvB complex plays an important role in the rescue of blocked DNA replication forks via replication fork reversal (RFR). RuvA specifically binds to HJ cruciform DNA, conferring on it an open structure. The RuvB hexamer acts as an ATP-dependent pump, pulling dsDNA into and through the RuvAB complex. RuvB forms 2 homohexamers on either side of HJ DNA bound by 1 or 2 RuvA tetramers; 4 subunits per hexamer contact DNA at a time. Coordinated motions by a converter formed by DNA-disengaged RuvB subunits stimulates ATP hydrolysis and nucleotide exchange. Immobilization of the converter enables RuvB to convert the ATP-contained energy into a lever motion, pulling 2 nucleotides of DNA out of the RuvA tetramer per ATP hydrolyzed, thus driving DNA branch migration. The RuvB motors rotate together with the DNA substrate, which together with the progressing nucleotide cycle form the mechanistic basis for DNA recombination by continuous HJ branch migration. Branch migration allows RuvC to scan DNA until it finds its consensus sequence, where it cleaves and resolves cruciform DNA. The sequence is that of Holliday junction branch migration complex subunit RuvB from Crocosphaera subtropica (strain ATCC 51142 / BH68) (Cyanothece sp. (strain ATCC 51142)).